The chain runs to 486 residues: B-type cell cycle switch protein ccs52B (486 aa).

The PEST motif signature appears at 24 to 36; the sequence is RLETLSTPPSSAS. The segment covering 27–36 has biased composition (polar residues); the sequence is TLSTPPSSAS. Positions 27-57 are disordered; sequence TLSTPPSSASPRAISNLSSTPSPSKSSKCSD. Residues 41–53 are compositionally biased toward low complexity; the sequence is SNLSSTPSPSKSS. A C-box motif is present at residues 57-63; it reads DRFIPCR. Positions 87 to 98 match the CSM motif motif; sequence AYNRLLKSELFG. 7 WD repeats span residues 177 to 214, 218 to 257, 260 to 297, 301 to 340, 343 to 385, 387 to 428, and 431 to 470; these read QDDFYLNLVDWSSQNTLAVGLGTCVYLWSASNSKVTKL, GPYDGVCSVQWTKEGSFISIGTNGGQVQIWDGTKCKKVRT, GHQTRTGVLAWNSRILASGSRDRNILQHDMRVPSDFIG, GHKSEVCGLKWSCDDRELASGGNDNQLLVWNQHSQQPTLR, EHTA…QLNS, DTGS…KVAT, and GHSMRVLYLAMSPDGQTIVTGAGDETLRFWNVFPSMKTPA.

Belongs to the WD repeat CDC20/Fizzy family. In terms of tissue distribution, mostly expressed in shoot apices and, to a lower extent, in roots, especially in root tips, and in hypocotyls. Expressed in nodulation-competent root zone but not in the nodules.

It functions in the pathway protein modification; protein ubiquitination. Functionally, component of the anaphase promoting complex/cyclosome (APC/C), a cell cycle-regulated E3 ubiquitin-protein ligase complex that controls progression through mitosis and the G1 phase of the cell cycle. The protein is B-type cell cycle switch protein ccs52B of Medicago truncatula (Barrel medic).